The primary structure comprises 113 residues: UPF0122 protein M6_Spy0905 (113 aa).

It belongs to the UPF0122 family.

Might take part in the signal recognition particle (SRP) pathway. This is inferred from the conservation of its genetic proximity to ftsY/ffh. May be a regulatory protein. This Streptococcus pyogenes serotype M6 (strain ATCC BAA-946 / MGAS10394) protein is UPF0122 protein M6_Spy0905.